The primary structure comprises 418 residues: Actin-related protein 3B (418 aa).

The protein belongs to the actin family. ARP3 subfamily. In terms of assembly, interacts with the Arp2/3 complex composed of ARP2, ARP3, ARPC1B, ARPC1B/p41-ARC, ARPC2/p34-ARC, ARPC3/p21-ARC, ARPC4/p20-ARC and ARPC5/p16-ARC.

The protein resides in the cytoplasm. It localises to the cytoskeleton. Its subcellular location is the cell projection. Functionally, plays a role in the organization of the actin cytoskeleton. May function as ATP-binding component of the Arp2/3 complex which is involved in regulation of actin polymerization and together with an activating nucleation-promoting factor (NPF) mediates the formation of branched actin networks. May decrease the metastatic potential of tumors. The chain is Actin-related protein 3B (Actr3b) from Mus musculus (Mouse).